The sequence spans 335 residues: Magnesium-protoporphyrin IX monomethyl ester [oxidative] cyclase (335 aa).

This sequence belongs to the AcsF family. The cofactor is Fe cation.

The protein localises to the plastid. The protein resides in the chloroplast. The enzyme catalyses Mg-protoporphyrin IX 13-monomethyl ester + 3 NADPH + 3 O2 + 2 H(+) = 3,8-divinyl protochlorophyllide a + 3 NADP(+) + 5 H2O. The protein operates within porphyrin-containing compound metabolism; chlorophyll biosynthesis (light-independent). Catalyzes the formation of the isocyclic ring in chlorophyll biosynthesis. Mediates the cyclase reaction, which results in the formation of divinylprotochlorophyllide (Pchlide) characteristic of all chlorophylls from magnesium-protoporphyrin IX 13-monomethyl ester (MgPMME). This is Magnesium-protoporphyrin IX monomethyl ester [oxidative] cyclase from Cyanidioschyzon merolae (strain NIES-3377 / 10D) (Unicellular red alga).